We begin with the raw amino-acid sequence, 94 residues long: Large ribosomal subunit protein eL37 (94 aa).

C19, C22, C34, and C37 together coordinate Zn(2+). The C4-type zinc finger occupies 19–37 (CRRCGKATYHKQKLRCAAC).

The protein belongs to the eukaryotic ribosomal protein eL37 family. It depends on Zn(2+) as a cofactor.

It localises to the cytoplasm. Its function is as follows. Binds to the 23S rRNA. The protein is Large ribosomal subunit protein eL37 (RPL37) of Tetrahymena thermophila (strain SB210).